The chain runs to 99 residues: uncharacterized protein (99 aa).

Residues 43–95 (ENEEIYADQVRRIKLRLRELRETYATSEDNWRELMDNLEELRDQIERLAIRGG) adopt a coiled-coil conformation.

This is an uncharacterized protein from Archaeoglobus fulgidus (strain ATCC 49558 / DSM 4304 / JCM 9628 / NBRC 100126 / VC-16).